The sequence spans 901 residues: MLIKLLTKVFGSRNDRTLRRMRKAVSLINAMEPEMEKLSDDELKAKTNEFRARIEKGESVESLIPEAFAVVREASKRVFGMRHFDVQLLGGMVLNDRCIAEMRTGEGKTLTATLPAYLNALSGKGVHVVTVNDYLAQRDAENNRPLFEFLGMSVGINLPGMPAPAKREAYAADITYGTNNEYGFDYLRDNMAFSPEERVQRKLHYALVDEVDSILIDEARTPLIISGPAEDSSEMYKKVNKIIPHLIRQEKEDSDTFQGEGHFSVDEKARQVNLTERGLVLIEELLVQEGIMDEGESLYSPGNIMLMHHVTAALRAHALFTRDVDYIVKDGEVIIVDEHTGRTMQGRRWSDGLHQAVEAKEGVEIQNENQTLASITFQNYFRLYEKLAGMTGTADTEAFEFSSIYKLDTVVVPTNRPMIRKDLPDLVYMTEAEKIQAIIEDIKERTANGQPVLVGTISIEKSEVVSRELTKAGIKHNVLNAKFHANEAGIVAQAGYPAAVTIATNMAGRGTDIMLGGSWQAEVAALEAPTEEQIAQIKADWQVRHDAVLAAGGLHIIGTERHESRRIDNQLRGRSGRQGDPGSSRFYLSMEDALMRIFASDRVSGMMRKLGMKPGEAIEHPWVTKAIANAQRKVESRNFDIRKQLLEYDDVANDQRRAIYTQRNELLDVSDVSDTINSIREDVFKATIDAYIPPQSLEEMWDIPGLQERLKNDFDLELPIAEWLDKEPELHEETLRERILAQSIEVYQRKEEVVGAEMMRHFEKGVMLQTLDSLWKEHLAAMDYLRQGIHLRGYAQKDPKQEYKRESFAMFAAMLESLKYEVISTLSKVQVRMPEEVEAMEMQRREEAERLAQMQQLSHQDDDTAVAADLAAQTGERKIGRNDPCPCGSGKKYKQCHGRLS.

ATP contacts are provided by residues Gln-87, 105–109, and Asp-512; that span reads GEGKT. Residues Cys-885, Cys-887, Cys-896, and His-897 each coordinate Zn(2+).

This sequence belongs to the SecA family. In terms of assembly, monomer and homodimer. Part of the essential Sec protein translocation apparatus which comprises SecA, SecYEG and auxiliary proteins SecDF-YajC and YidC. Zn(2+) is required as a cofactor.

Its subcellular location is the cell inner membrane. It is found in the cytoplasm. It carries out the reaction ATP + H2O + cellular proteinSide 1 = ADP + phosphate + cellular proteinSide 2.. Part of the Sec protein translocase complex. Interacts with the SecYEG preprotein conducting channel. Has a central role in coupling the hydrolysis of ATP to the transfer of proteins into and across the cell membrane, serving both as a receptor for the preprotein-SecB complex and as an ATP-driven molecular motor driving the stepwise translocation of polypeptide chains across the membrane. This chain is Protein translocase subunit SecA, found in Salmonella schwarzengrund (strain CVM19633).